A 199-amino-acid polypeptide reads, in one-letter code: LIM domain-containing protein E (199 aa).

In terms of domain architecture, LIM zinc-binding spans 5-65 (VKCGACAKTA…PVHTPKVSAT (61 aa)). Residues 134–199 (YAVFGADGQP…EEEQQYEEEQ (66 aa)) are disordered. Low complexity-rich tracts occupy residues 146-155 (EQQEQQQYTE) and 163-174 (EEQQYQEEQQQY). Over residues 175 to 199 (QEEEQQYQEEEQQYQEEEQQYEEEQ) the composition is skewed to acidic residues.

May interact with rac1A.

The protein localises to the cytoplasm. It localises to the cell cortex. It is found in the nucleus. The protein resides in the cell projection. Its subcellular location is the lamellipodium. The protein localises to the filopodium. It localises to the cytoskeleton. Functionally, associates with the actin cytoskeleton and may regulate actin polymerization in lamellipodia, through a rac1-dependent signaling pathway. May play a role in cell motility. Involved in cytokinesis by regulating the microtubule system and linking it to the cortical actin network. In Dictyostelium discoideum (Social amoeba), this protein is LIM domain-containing protein E (limE).